A 760-amino-acid chain; its full sequence is 5-methyltetrahydropteroyltriglutamate--homocysteine methyltransferase (760 aa).

Residues 17–20 (RELK) and lysine 118 contribute to the 5-methyltetrahydropteroyltri-L-glutamate site. L-homocysteine contacts are provided by residues 436–438 (IGS) and glutamate 489. L-methionine-binding positions include 436 to 438 (IGS) and glutamate 489. Residues 520 to 521 (RC) and tryptophan 566 each bind 5-methyltetrahydropteroyltri-L-glutamate. Residue aspartate 604 participates in L-homocysteine binding. Residue aspartate 604 coordinates L-methionine. A 5-methyltetrahydropteroyltri-L-glutamate-binding site is contributed by glutamate 610. Zn(2+) is bound by residues histidine 646, cysteine 648, and glutamate 670. The Proton donor role is filled by histidine 699. Residue cysteine 731 coordinates Zn(2+).

The protein belongs to the vitamin-B12 independent methionine synthase family. Zn(2+) is required as a cofactor.

It carries out the reaction 5-methyltetrahydropteroyltri-L-glutamate + L-homocysteine = tetrahydropteroyltri-L-glutamate + L-methionine. The protein operates within amino-acid biosynthesis; L-methionine biosynthesis via de novo pathway; L-methionine from L-homocysteine (MetE route): step 1/1. Functionally, catalyzes the transfer of a methyl group from 5-methyltetrahydrofolate to homocysteine resulting in methionine formation. This chain is 5-methyltetrahydropteroyltriglutamate--homocysteine methyltransferase, found in Vibrio harveyi (Beneckea harveyi).